We begin with the raw amino-acid sequence, 339 residues long: MGVNLKEIVDPVKKEIEFKQLFGKVIAIDAFNALYQFLFSIRQDGEPLRDSKGRITSHLSGLFYRTINLLEYGIKPIYVFDGTPPKFKIVAWEKRKKHKEQLESKYKEALKKGNIQEAIKYAKSLGKLDSYMVEEAKKLLEAMGIPYVQAPSEGEAEAAYLTKKGVSDYCGSQDYDSLLFGSPRVVRNITISEKRKLPGKNIYVEVKPEVIELEAVLNYWKITREQLIAIAMLLGTDYNEKVPGIGPKTAIEIVKRFGDPIKVIEYYKIPNGKEIFEFFLNPPVIDFEPKWGKPNKELIFKILVEEHDFNPERVERAIERLEKALNKINQKTLFSFFGS.

The N-domain stretch occupies residues 1 to 99; the sequence is MGVNLKEIVD…VAWEKRKKHK (99 aa). Positions 29, 81, 153, 155, 174, 176, and 237 each coordinate Mg(2+). The I-domain stretch occupies residues 117–258; that stretch reads EAIKYAKSLG…TAIEIVKRFG (142 aa). The segment at 329 to 337 is interaction with PCNA; that stretch reads NQKTLFSFF.

This sequence belongs to the XPG/RAD2 endonuclease family. FEN1 subfamily. Interacts with PCNA. PCNA stimulates the nuclease activity without altering cleavage specificity. Mg(2+) is required as a cofactor.

Structure-specific nuclease with 5'-flap endonuclease and 5'-3' exonuclease activities involved in DNA replication and repair. During DNA replication, cleaves the 5'-overhanging flap structure that is generated by displacement synthesis when DNA polymerase encounters the 5'-end of a downstream Okazaki fragment. Binds the unpaired 3'-DNA end and kinks the DNA to facilitate 5' cleavage specificity. Cleaves one nucleotide into the double-stranded DNA from the junction in flap DNA, leaving a nick for ligation. Also involved in the base excision repair (BER) pathway. Acts as a genome stabilization factor that prevents flaps from equilibrating into structures that lead to duplications and deletions. Also possesses 5'-3' exonuclease activity on nicked or gapped double-stranded DNA. The chain is Flap endonuclease 1 from Nanoarchaeum equitans (strain Kin4-M).